Here is a 347-residue protein sequence, read N- to C-terminus: Eukaryotic translation initiation factor 3 subunit I (347 aa).

5 WD repeats span residues 8–47 (GHERPLTQVKFNRDGDLVFACSKDSVASIWYAINGERLGT), 50–89 (DHSGTIWSIDVDESTTYALTGGADFCFKIWKVATGVAVHS), 150–190 (EQAT…VQAK), 192–233 (IHEK…KTYK), and 289–328 (GHFGPLNYVAVSPTGTSYASGGEDGYIRLHHFDKSYFDFK).

It belongs to the eIF-3 subunit I family. Component of the eukaryotic translation initiation factor 3 (eIF-3) complex.

Its subcellular location is the cytoplasm. In terms of biological role, component of the eukaryotic translation initiation factor 3 (eIF-3) complex, which is involved in protein synthesis of a specialized repertoire of mRNAs and, together with other initiation factors, stimulates binding of mRNA and methionyl-tRNAi to the 40S ribosome. The eIF-3 complex specifically targets and initiates translation of a subset of mRNAs involved in cell proliferation. The protein is Eukaryotic translation initiation factor 3 subunit I of Kluyveromyces lactis (strain ATCC 8585 / CBS 2359 / DSM 70799 / NBRC 1267 / NRRL Y-1140 / WM37) (Yeast).